Here is a 187-residue protein sequence, read N- to C-terminus: Hypoxanthine/guanine phosphoribosyltransferase (187 aa).

This sequence belongs to the purine/pyrimidine phosphoribosyltransferase family. Archaeal HPRT subfamily. As to quaternary structure, homodimer.

The protein resides in the cytoplasm. It catalyses the reaction IMP + diphosphate = hypoxanthine + 5-phospho-alpha-D-ribose 1-diphosphate. The enzyme catalyses GMP + diphosphate = guanine + 5-phospho-alpha-D-ribose 1-diphosphate. It functions in the pathway purine metabolism; IMP biosynthesis via salvage pathway; IMP from hypoxanthine: step 1/1. Functionally, catalyzes a salvage reaction resulting in the formation of IMP that is energically less costly than de novo synthesis. The sequence is that of Hypoxanthine/guanine phosphoribosyltransferase from Methanococcus voltae (strain ATCC BAA-1334 / A3).